A 433-amino-acid chain; its full sequence is Serine--tRNA ligase (433 aa).

Position 235-237 (235-237 (TSE)) interacts with L-serine. 266–268 (RSE) is a binding site for ATP. E289 is a binding site for L-serine. Residue 353-356 (EISS) participates in ATP binding. S388 provides a ligand contact to L-serine.

It belongs to the class-II aminoacyl-tRNA synthetase family. Type-1 seryl-tRNA synthetase subfamily. As to quaternary structure, homodimer. The tRNA molecule binds across the dimer.

It is found in the cytoplasm. The enzyme catalyses tRNA(Ser) + L-serine + ATP = L-seryl-tRNA(Ser) + AMP + diphosphate + H(+). The catalysed reaction is tRNA(Sec) + L-serine + ATP = L-seryl-tRNA(Sec) + AMP + diphosphate + H(+). Its pathway is aminoacyl-tRNA biosynthesis; selenocysteinyl-tRNA(Sec) biosynthesis; L-seryl-tRNA(Sec) from L-serine and tRNA(Sec): step 1/1. In terms of biological role, catalyzes the attachment of serine to tRNA(Ser). Is also able to aminoacylate tRNA(Sec) with serine, to form the misacylated tRNA L-seryl-tRNA(Sec), which will be further converted into selenocysteinyl-tRNA(Sec). The polypeptide is Serine--tRNA ligase (Burkholderia orbicola (strain MC0-3)).